Here is a 254-residue protein sequence, read N- to C-terminus: Ribonuclease HII (254 aa).

The 185-residue stretch at 70-254 folds into the RNase H type-2 domain; that stretch reads QAIAGIDEVG…TFEPIKSMYE (185 aa). Residues aspartate 76, glutamate 77, and aspartate 168 each coordinate a divalent metal cation.

This sequence belongs to the RNase HII family. Requires Mn(2+) as cofactor. The cofactor is Mg(2+).

The protein resides in the cytoplasm. It catalyses the reaction Endonucleolytic cleavage to 5'-phosphomonoester.. Its function is as follows. Endonuclease that specifically degrades the RNA of RNA-DNA hybrids. The polypeptide is Ribonuclease HII (Streptococcus sanguinis (strain SK36)).